The following is a 407-amino-acid chain: Tyrosine--tRNA ligase (407 aa).

Y35 contributes to the L-tyrosine binding site. The short motif at 40 to 49 is the 'HIGH' region element; it reads PTADSLHVGH. L-tyrosine is bound by residues Y168 and Q172. The 'KMSKS' region motif lies at 228–232; sequence KMGKT. K231 contacts ATP. The S4 RNA-binding domain maps to 341 to 405; it reads NSLVDLLAKC…RGKKNFNRIV (65 aa).

This sequence belongs to the class-I aminoacyl-tRNA synthetase family. TyrS type 1 subfamily. In terms of assembly, homodimer.

It is found in the cytoplasm. The enzyme catalyses tRNA(Tyr) + L-tyrosine + ATP = L-tyrosyl-tRNA(Tyr) + AMP + diphosphate + H(+). Functionally, catalyzes the attachment of tyrosine to tRNA(Tyr) in a two-step reaction: tyrosine is first activated by ATP to form Tyr-AMP and then transferred to the acceptor end of tRNA(Tyr). This Clostridium botulinum (strain Loch Maree / Type A3) protein is Tyrosine--tRNA ligase.